Reading from the N-terminus, the 80-residue chain is Putative membrane protein insertion efficiency factor (80 aa).

Residues 60–80 (SKTGKDPVPDRFSLKRNQEGE) are disordered. A compositionally biased stretch (basic and acidic residues) spans 62 to 80 (TGKDPVPDRFSLKRNQEGE).

This sequence belongs to the UPF0161 family.

It localises to the cell membrane. Could be involved in insertion of integral membrane proteins into the membrane. The polypeptide is Putative membrane protein insertion efficiency factor (Streptococcus pneumoniae serotype 4 (strain ATCC BAA-334 / TIGR4)).